Reading from the N-terminus, the 347-residue chain is Probable cytosolic iron-sulfur protein assembly protein 1 (347 aa).

WD repeat units lie at residues 11–48, 62–101, 122–161, 168–207, 212–255, 266–304, and 311–347; these read LHNEKIWDIDCYKGLLATASTDRRIKIVNIGDIGDGLV, SHKKTVRSVAWRPHSTILAAGSFDSTVSIWAKDENDGDAD, GHENEVKSVAWSKDGYFLATCSRDKSVWIWESDEMGEEYE, EHSQDVKHVVWHPFKDILASSSYDDTIRIWKEYDDDWEAA, GHEG…SIEE, VHGKPVYSVSWSEDGLIASAGSDGMLVIYKENKDNVWEV, and SHSIYEINVVKWIKLNNGKSYLATAGDDGYVNIWAYN.

It belongs to the WD repeat CIA1 family. As to quaternary structure, interacts with NAR1.

It is found in the cytoplasm. Its subcellular location is the nucleus. Functionally, essential component of the cytosolic iron-sulfur (Fe/S) protein assembly machinery. Required for the maturation of extramitochondrial Fe/S proteins. The chain is Probable cytosolic iron-sulfur protein assembly protein 1 from Vanderwaltozyma polyspora (strain ATCC 22028 / DSM 70294 / BCRC 21397 / CBS 2163 / NBRC 10782 / NRRL Y-8283 / UCD 57-17) (Kluyveromyces polysporus).